Here is a 92-residue protein sequence, read N- to C-terminus: Small ribosomal subunit protein bS20 (92 aa).

The protein belongs to the bacterial ribosomal protein bS20 family.

In terms of biological role, binds directly to 16S ribosomal RNA. This is Small ribosomal subunit protein bS20 from Magnetococcus marinus (strain ATCC BAA-1437 / JCM 17883 / MC-1).